We begin with the raw amino-acid sequence, 335 residues long: Acetyl-coenzyme A carboxylase carboxyl transferase subunit alpha (335 aa).

The CoA carboxyltransferase C-terminal domain maps to Thr-48–Ala-308.

This sequence belongs to the AccA family. Acetyl-CoA carboxylase is a heterohexamer composed of biotin carboxyl carrier protein (AccB), biotin carboxylase (AccC) and two subunits each of ACCase subunit alpha (AccA) and ACCase subunit beta (AccD).

It is found in the cytoplasm. It carries out the reaction N(6)-carboxybiotinyl-L-lysyl-[protein] + acetyl-CoA = N(6)-biotinyl-L-lysyl-[protein] + malonyl-CoA. It functions in the pathway lipid metabolism; malonyl-CoA biosynthesis; malonyl-CoA from acetyl-CoA: step 1/1. In terms of biological role, component of the acetyl coenzyme A carboxylase (ACC) complex. First, biotin carboxylase catalyzes the carboxylation of biotin on its carrier protein (BCCP) and then the CO(2) group is transferred by the carboxyltransferase to acetyl-CoA to form malonyl-CoA. In Pelodictyon phaeoclathratiforme (strain DSM 5477 / BU-1), this protein is Acetyl-coenzyme A carboxylase carboxyl transferase subunit alpha.